The following is a 545-amino-acid chain: Glucose-6-phosphate isomerase (545 aa).

The active-site Proton donor is the Glu349. Active-site residues include His380 and Lys509.

The protein belongs to the GPI family.

The protein localises to the cytoplasm. The enzyme catalyses alpha-D-glucose 6-phosphate = beta-D-fructose 6-phosphate. It participates in carbohydrate biosynthesis; gluconeogenesis. The protein operates within carbohydrate degradation; glycolysis; D-glyceraldehyde 3-phosphate and glycerone phosphate from D-glucose: step 2/4. In terms of biological role, catalyzes the reversible isomerization of glucose-6-phosphate to fructose-6-phosphate. The protein is Glucose-6-phosphate isomerase of Chelativorans sp. (strain BNC1).